Here is a 254-residue protein sequence, read N- to C-terminus: Glutamate racemase (254 aa).

Residues 7–8 (DS) and 39–40 (YG) contribute to the substrate site. Cys70 functions as the Proton donor/acceptor in the catalytic mechanism. Substrate-binding positions include 71–72 (NT) and Glu147. Residue Cys178 is the Proton donor/acceptor of the active site. 179-180 (TH) contributes to the substrate binding site.

Belongs to the aspartate/glutamate racemases family. As to quaternary structure, homodimer.

The enzyme catalyses L-glutamate = D-glutamate. The protein operates within cell wall biogenesis; peptidoglycan biosynthesis. Functionally, provides the (R)-glutamate required for cell wall biosynthesis. Converts L- or D-glutamate to D- or L-glutamate, respectively, but not other amino acids such as alanine, aspartate, and glutamine. This Aquifex pyrophilus protein is Glutamate racemase.